A 465-amino-acid chain; its full sequence is Clusterin-like protein 1 (465 aa).

The N-terminal stretch at Met-1–Cys-20 is a signal peptide. Residues Met-62–Gln-106 are a coiled coil. Disulfide bonds link Cys-105/Cys-333, Cys-116/Cys-325, Cys-119/Cys-322, and Cys-124/Cys-315. 7 N-linked (GlcNAc...) asparagine glycosylation sites follow: Asn-196, Asn-257, Asn-285, Asn-311, Asn-351, Asn-412, and Asn-430.

The protein belongs to the clusterin family. Retina-specific (at protein level). In the light-adapted retina, expressed in the outer segment of cone photoreceptors. In the dark-adapted retina, strongly expressed in the outer plexiform layer in the region of contact between the cone pedicles and second order neurons with little or no expression in the cone photoreceptor outer segments.

It localises to the secreted. The chain is Clusterin-like protein 1 (CLUL1) from Canis lupus familiaris (Dog).